The following is a 410-amino-acid chain: Adenosylhomocysteinase (410 aa).

Positions 117 and 142 each coordinate substrate. 143–145 lines the NAD(+) pocket; it reads TTT. The substrate site is built by K172 and D176. Residues N177, 206–211, E229, 285–287, and N332 contribute to the NAD(+) site; these read GYGYCG and AGH.

This sequence belongs to the adenosylhomocysteinase family. NAD(+) serves as cofactor.

The protein localises to the cytoplasm. The catalysed reaction is S-adenosyl-L-homocysteine + H2O = L-homocysteine + adenosine. It participates in amino-acid biosynthesis; L-homocysteine biosynthesis; L-homocysteine from S-adenosyl-L-homocysteine: step 1/1. Functionally, may play a key role in the regulation of the intracellular concentration of adenosylhomocysteine. This Thermoplasma volcanium (strain ATCC 51530 / DSM 4299 / JCM 9571 / NBRC 15438 / GSS1) protein is Adenosylhomocysteinase.